Consider the following 70-residue polypeptide: Large ribosomal subunit protein bL31 (70 aa).

Zn(2+)-binding residues include Cys-16, Cys-18, Cys-37, and Cys-40.

This sequence belongs to the bacterial ribosomal protein bL31 family. Type A subfamily. As to quaternary structure, part of the 50S ribosomal subunit. The cofactor is Zn(2+).

Its function is as follows. Binds the 23S rRNA. This chain is Large ribosomal subunit protein bL31, found in Shewanella frigidimarina (strain NCIMB 400).